The following is a 138-amino-acid chain: Large ribosomal subunit protein uL16 (138 aa).

Positions 1-15 are enriched in basic residues; the sequence is MLSPRKVKYRKKQRG. Residues 1–21 form a disordered region; sequence MLSPRKVKYRKKQRGRLSGEA.

Belongs to the universal ribosomal protein uL16 family. Part of the 50S ribosomal subunit.

Functionally, binds 23S rRNA and is also seen to make contacts with the A and possibly P site tRNAs. The chain is Large ribosomal subunit protein uL16 from Borrelia recurrentis (strain A1).